The primary structure comprises 266 residues: Ankyrin repeat domain-containing protein 45 (266 aa).

Composition is skewed to acidic residues over residues 1–11 (MESEGPPESES) and 18–32 (QEEE…EPEE). Positions 1–43 (MESEGPPESESSEFFSQQEEENEEEEAQEPEETGPKNPLLQPA) are disordered. ANK repeat units follow at residues 76-105 (VGRN…NLNE) and 109-138 (RGYT…DIEA).

The protein resides in the cytoplasm. The protein localises to the midbody. Its subcellular location is the midbody ring. It is found in the cleavage furrow. Its function is as follows. May play a role during cell division. In Homo sapiens (Human), this protein is Ankyrin repeat domain-containing protein 45.